The primary structure comprises 455 residues: C4-dicarboxylate transport protein (455 aa).

The next 8 membrane-spanning stretches (helical) occupy residues 20–40 (HLYF…HFYP), 59–79 (MIIA…MGTL), 91–111 (GYFL…ANVI), 160–180 (GNIL…ILIG), 209–229 (PIGA…ASVV), 231–251 (LATL…VVLG), 344–364 (LLLV…AGFI), and 367–387 (AATL…ILGV).

This sequence belongs to the dicarboxylate/amino acid:cation symporter (DAACS) (TC 2.A.23) family.

The protein resides in the cell inner membrane. In terms of biological role, responsible for the transport of dicarboxylates such as succinate, fumarate, and malate from the periplasm across the membrane. The protein is C4-dicarboxylate transport protein of Paracoccus denitrificans (strain Pd 1222).